Here is a 141-residue protein sequence, read N- to C-terminus: Drosulfakinins (141 aa).

The N-terminal stretch at 1-31 is a signal peptide; it reads MGLRRCTHFATLVMPLWALALFFLVVMQVPA. Positions 32–73 are excised as a propeptide; that stretch reads QTTSLQISKEDRRLQELESKMGAESEQPNANLVGPSISRFGD. Residues 49-69 form a disordered region; the sequence is ESKMGAESEQPNANLVGPSIS. Position 82 is a phenylalanine amide (F82). Residues 86-111 constitute a propeptide that is removed on maturation; that stretch reads VPLISRPMIPIELDLLMDNDDERTKA. Residue Y117 is modified to Sulfotyrosine. F122 bears the Phenylalanine amide mark. Position 134 is a sulfotyrosine (Y134). Residue F139 is modified to Phenylalanine amide.

It belongs to the gastrin/cholecystokinin family.

The protein localises to the secreted. Drosulfakinin-0 (DSK 0) plays diverse biological roles including regulating gut muscle contraction in adults but not in larvae. This chain is Drosulfakinins, found in Drosophila erecta (Fruit fly).